A 405-amino-acid polypeptide reads, in one-letter code: Divinyl chlorophyllide a 8-vinyl-reductase, chloroplastic (405 aa).

Residues 1-58 constitute a chloroplast transit peptide; sequence MAALLLSSHLTAASSSSTTSPTARPAPSFVSFRAANAAPKGARRGWPFLASSVEPPPA.

It localises to the plastid. Its subcellular location is the chloroplast. The catalysed reaction is protochlorophyllide a + NADP(+) = 3,8-divinyl protochlorophyllide a + NADPH + H(+). The protein operates within porphyrin-containing compound metabolism; chlorophyll biosynthesis. Its function is as follows. Catalyzes the conversion of divinyl chlorophyllide to monovinyl chlorophyllide. Reduces the 8-vinyl group of the tetrapyrrole to an ethyl group using NADPH as the reductant. Can use (3,8-divinyl)-chlorophyllide a (DV-Chlidea) &gt; (3,8-divinyl)-chlorophyll a (DV-Chla) &gt; (3,8-divinyl)-protochlorophyllide a (DV-Pchlidea) &gt; (3,8-divinyl)-magnesium-protoporphyrin IX monomethyl ester (DV-MPE) &gt; (3,8-divinyl)-magnesium-protoporphyrin IX (DV-Mg-Proto) as substrates. This chain is Divinyl chlorophyllide a 8-vinyl-reductase, chloroplastic (DVR), found in Oryza sativa subsp. indica (Rice).